Consider the following 450-residue polypeptide: MIPEHLSIYTAYNANIDAIVKLNQETIQNLINAFDPDEVKRRIEEYPREINEPIDFVARLVHTLKLGKPAAVPLVNEKMNEWFDKTFRYEEERLGGQAGIIANTLAGLKIRKVIAYTPFLPKRLAELFKKGVLYPVVENGELQFKPIQEAYREGDPLKINRIFEFRKGLKFKLGDETIEIPNSGRFIVSARFESISRIETREDIKPFLGEIGKEVDGAIFSGYQGLRTKYSDGKDANYYLRRAKEDIIEFKEKDVKIHVEFASVQDRKLRKKIITNILPFVDSVGIDEAEIAQILSVLGYRELADRIFTYNRLEDSILGGMIILDELNFEILQVHTTYYLMYITHRDNPLSEEELAKSLEFGTTLAAARASLGDIRGPDDYKVGLKVPFNERSEYVKLRFEEAKSRLRMREYKVVVIPTRLVQNPVLTVGLGDTISAGAFLTYLEFLKRH.

The ADPK domain occupies 1–449 (MIPEHLSIYT…FLTYLEFLKR (449 aa)). 3 residues coordinate Mg(2+): E260, E290, and D433. Residue D433 is the Proton acceptor of the active site.

It belongs to the carbohydrate kinase PfkC family. The cofactor is Mg(2+).

It localises to the cytoplasm. The enzyme catalyses beta-D-fructose 6-phosphate + ADP = beta-D-fructose 1,6-bisphosphate + AMP + H(+). The protein operates within carbohydrate degradation; glycolysis. Functionally, catalyzes the phosphorylation of fructose 6-phosphate to fructose 1,6-bisphosphate using ADP as the phosphate donor. In Pyrococcus horikoshii (strain ATCC 700860 / DSM 12428 / JCM 9974 / NBRC 100139 / OT-3), this protein is ADP-specific phosphofructokinase.